The sequence spans 220 residues: 7-cyano-7-deazaguanine synthase (220 aa).

An ATP-binding site is contributed by 7-17 (LSGGMDSSITA). The Zn(2+) site is built by Cys185, Cys193, Cys196, and Cys199.

It belongs to the QueC family. The cofactor is Zn(2+).

The catalysed reaction is 7-carboxy-7-deazaguanine + NH4(+) + ATP = 7-cyano-7-deazaguanine + ADP + phosphate + H2O + H(+). Its pathway is purine metabolism; 7-cyano-7-deazaguanine biosynthesis. Catalyzes the ATP-dependent conversion of 7-carboxy-7-deazaguanine (CDG) to 7-cyano-7-deazaguanine (preQ(0)). The sequence is that of 7-cyano-7-deazaguanine synthase from Nitratiruptor sp. (strain SB155-2).